The following is a 319-amino-acid chain: Iron-sulfur cluster transfer protein NUBPL (319 aa).

The transit peptide at 1–38 directs the protein to the mitochondrion; sequence MGTWRRLLLFGGVSLRGGGAATVPPRGCRALGCGRQLL. Residue 75–82 coordinates ATP; that stretch reads GKGGVGKS.

Belongs to the Mrp/NBP35 ATP-binding proteins family. It depends on [4Fe-4S] cluster as a cofactor.

The protein localises to the mitochondrion. Its function is as follows. Iron-sulfur cluster transfer protein involved in the assembly of the mitochondrial membrane respiratory chain NADH dehydrogenase (Complex I). May deliver one or more Fe-S clusters to complex I subunits. The chain is Iron-sulfur cluster transfer protein NUBPL (Nubpl) from Mus musculus (Mouse).